Consider the following 85-residue polypeptide: Large ribosomal subunit protein bL27 (85 aa).

Positions 1-20 (MAHKKAGGSTRNGRDSEAKR) are disordered.

It belongs to the bacterial ribosomal protein bL27 family.

This Escherichia coli O139:H28 (strain E24377A / ETEC) protein is Large ribosomal subunit protein bL27.